The sequence spans 197 residues: Ribonuclease HII (197 aa).

The RNase H type-2 domain occupies 11–197 (GRIAGVDEVG…FGPVKRVLGL (187 aa)). Residues D17, E18, and D109 each coordinate a divalent metal cation.

It belongs to the RNase HII family. The cofactor is Mn(2+). Mg(2+) serves as cofactor.

It is found in the cytoplasm. It catalyses the reaction Endonucleolytic cleavage to 5'-phosphomonoester.. Functionally, endonuclease that specifically degrades the RNA of RNA-DNA hybrids. This chain is Ribonuclease HII, found in Edwardsiella ictaluri (strain 93-146).